The sequence spans 469 residues: Ribulose bisphosphate carboxylase large chain (469 aa).

The propeptide occupies 1–2; it reads MS. Position 3 is an N-acetylproline (Pro3). The residue at position 14 (Lys14) is an N6,N6,N6-trimethyllysine. Positions 123 and 173 each coordinate substrate. Residue Lys175 is the Proton acceptor of the active site. A substrate-binding site is contributed by Lys177. The Mg(2+) site is built by Lys201, Asp203, and Glu204. Lys201 carries the post-translational modification N6-carboxylysine. The active-site Proton acceptor is the His294. Substrate is bound by residues Arg295, His327, and Ser379.

This sequence belongs to the RuBisCO large chain family. Type I subfamily. Heterohexadecamer of 8 large chains and 8 small chains; disulfide-linked. The disulfide link is formed within the large subunit homodimers. The cofactor is Mg(2+). The disulfide bond which can form in the large chain dimeric partners within the hexadecamer appears to be associated with oxidative stress and protein turnover.

Its subcellular location is the plastid. It is found in the chloroplast. It catalyses the reaction 2 (2R)-3-phosphoglycerate + 2 H(+) = D-ribulose 1,5-bisphosphate + CO2 + H2O. It carries out the reaction D-ribulose 1,5-bisphosphate + O2 = 2-phosphoglycolate + (2R)-3-phosphoglycerate + 2 H(+). In terms of biological role, ruBisCO catalyzes two reactions: the carboxylation of D-ribulose 1,5-bisphosphate, the primary event in carbon dioxide fixation, as well as the oxidative fragmentation of the pentose substrate in the photorespiration process. Both reactions occur simultaneously and in competition at the same active site. The sequence is that of Ribulose bisphosphate carboxylase large chain from Dianthus caryophyllus (Carnation).